Here is a 259-residue protein sequence, read N- to C-terminus: MLLNIANSIGKRTIRLAQSIGKFSIFSLAAITSIIRPPLYFSLIIKQLLFIGFYSLPVVAMTTFFSGAVLALQSYTGFSRFSAESSIATVVVLSLTRELGPVLAGLMVAGRVGASIAAEIGTMRVTEQVDALYTLSTDSIKYLVFPKVIAAIITMPCLVLIGDVIGVMGGYLVGVYKLDFNSSTYLTSTFQYLEPIDVISGLVKAGVFGFIISIISCYSGYYSGKGAKGVGRATTSAVVNSSILILISNYLITELFFKV.

5 helical membrane-spanning segments follow: residues 25–45 (IFSL…SLII), 49–69 (LFIG…SGAV), 148–168 (VIAA…IGVM), 195–215 (PIDV…ISII), and 237–257 (AVVN…ELFF).

It belongs to the MlaE permease family.

Its subcellular location is the cell inner membrane. Functionally, could be part of an ABC transporter complex. In Rickettsia bellii (strain RML369-C), this protein is Probable ABC transporter permease protein RBE_1340.